A 329-amino-acid chain; its full sequence is 4-diphosphocytidyl-2-C-methyl-D-erythritol kinase (329 aa).

The active site involves Lys14. 117 to 127 is an ATP binding site; it reads PSGAGMGGASS. Residue Asp166 is part of the active site.

This sequence belongs to the GHMP kinase family. IspE subfamily.

The enzyme catalyses 4-CDP-2-C-methyl-D-erythritol + ATP = 4-CDP-2-C-methyl-D-erythritol 2-phosphate + ADP + H(+). The protein operates within isoprenoid biosynthesis; isopentenyl diphosphate biosynthesis via DXP pathway; isopentenyl diphosphate from 1-deoxy-D-xylulose 5-phosphate: step 3/6. Catalyzes the phosphorylation of the position 2 hydroxy group of 4-diphosphocytidyl-2C-methyl-D-erythritol. In Rhodopirellula baltica (strain DSM 10527 / NCIMB 13988 / SH1), this protein is 4-diphosphocytidyl-2-C-methyl-D-erythritol kinase.